The sequence spans 336 residues: Nicotinate-nucleotide--dimethylbenzimidazole phosphoribosyltransferase (336 aa).

The segment at 20–41 (GPDAAARAGAEERNGQLTKPPG) is disordered. Residue Glu304 is the Proton acceptor of the active site.

This sequence belongs to the CobT family.

The enzyme catalyses 5,6-dimethylbenzimidazole + nicotinate beta-D-ribonucleotide = alpha-ribazole 5'-phosphate + nicotinate + H(+). It participates in nucleoside biosynthesis; alpha-ribazole biosynthesis; alpha-ribazole from 5,6-dimethylbenzimidazole: step 1/2. Its function is as follows. Catalyzes the synthesis of alpha-ribazole-5'-phosphate from nicotinate mononucleotide (NAMN) and 5,6-dimethylbenzimidazole (DMB). The polypeptide is Nicotinate-nucleotide--dimethylbenzimidazole phosphoribosyltransferase (Ruegeria pomeroyi (strain ATCC 700808 / DSM 15171 / DSS-3) (Silicibacter pomeroyi)).